We begin with the raw amino-acid sequence, 59 residues long: Sec-independent protein translocase protein TatA 1 (59 aa).

Residues 3-23 traverse the membrane as a helical segment; it reads FPLPWQLILILLVILVIFGAS.

It belongs to the TatA/E family. As to quaternary structure, forms a complex with TatC.

It localises to the cell inner membrane. Its function is as follows. Part of the twin-arginine translocation (Tat) system that transports large folded proteins containing a characteristic twin-arginine motif in their signal peptide across membranes. TatA could form the protein-conducting channel of the Tat system. The protein is Sec-independent protein translocase protein TatA 1 of Aquifex aeolicus (strain VF5).